The chain runs to 56 residues: UPF0434 protein Sden_2197 (56 aa).

It belongs to the UPF0434 family.

This is UPF0434 protein Sden_2197 from Shewanella denitrificans (strain OS217 / ATCC BAA-1090 / DSM 15013).